Consider the following 274-residue polypeptide: 2,3,4,5-tetrahydropyridine-2,6-dicarboxylate N-succinyltransferase (274 aa).

Substrate contacts are provided by Arg-103 and Asp-140.

The protein belongs to the transferase hexapeptide repeat family. Homotrimer.

The protein resides in the cytoplasm. It catalyses the reaction (S)-2,3,4,5-tetrahydrodipicolinate + succinyl-CoA + H2O = (S)-2-succinylamino-6-oxoheptanedioate + CoA. The protein operates within amino-acid biosynthesis; L-lysine biosynthesis via DAP pathway; LL-2,6-diaminopimelate from (S)-tetrahydrodipicolinate (succinylase route): step 1/3. The protein is 2,3,4,5-tetrahydropyridine-2,6-dicarboxylate N-succinyltransferase of Pasteurella multocida (strain Pm70).